The following is a 260-amino-acid chain: tRNA (guanine-N(1)-)-methyltransferase (260 aa).

S-adenosyl-L-methionine-binding positions include Gly-117 and 137–142; that span reads LGDFVL.

The protein belongs to the RNA methyltransferase TrmD family. As to quaternary structure, homodimer.

The protein resides in the cytoplasm. It carries out the reaction guanosine(37) in tRNA + S-adenosyl-L-methionine = N(1)-methylguanosine(37) in tRNA + S-adenosyl-L-homocysteine + H(+). Specifically methylates guanosine-37 in various tRNAs. This is tRNA (guanine-N(1)-)-methyltransferase from Cupriavidus taiwanensis (strain DSM 17343 / BCRC 17206 / CCUG 44338 / CIP 107171 / LMG 19424 / R1) (Ralstonia taiwanensis (strain LMG 19424)).